A 410-amino-acid chain; its full sequence is Putative competence-damage inducible protein (410 aa).

This sequence belongs to the CinA family.

This is Putative competence-damage inducible protein from Clostridium beijerinckii (strain ATCC 51743 / NCIMB 8052) (Clostridium acetobutylicum).